The following is an 88-amino-acid chain: Sapecin-B (88 aa).

Positions 1 to 24 are cleaved as a signal peptide; sequence MKFLTSLLLLFVVVMVSAVNLSMA. Positions 25-54 are excised as a propeptide; the sequence is KESANQLTERLQELDGAAIQEPAELNRHKR. 3 disulfides stabilise this stretch: cysteine 57-cysteine 78, cysteine 64-cysteine 84, and cysteine 68-cysteine 86.

This sequence belongs to the invertebrate defensin family. Type 1 subfamily. Hemocytes and fat body.

Its subcellular location is the secreted. In terms of biological role, sapecins, which are potent bactericidal proteins, are produced in response to injury. Sapecin B is cytotoxic to Gram-positive bacteria. In Sarcophaga peregrina (Flesh fly), this protein is Sapecin-B.